The following is a 213-amino-acid chain: Putative tRNA methyltransferase MPN_351 (213 aa).

The protein belongs to the TrmK family.

Its subcellular location is the cytoplasm. This chain is Putative tRNA methyltransferase MPN_351, found in Mycoplasma pneumoniae (strain ATCC 29342 / M129 / Subtype 1) (Mycoplasmoides pneumoniae).